A 736-amino-acid chain; its full sequence is Phosphoribosylformylglycinamidine synthase subunit PurL (736 aa).

H49 is an active-site residue. The ATP site is built by Y52 and K91. E93 contacts Mg(2+). Substrate-binding positions include 94 to 97 (SHNH) and R116. Catalysis depends on H95, which acts as the Proton acceptor. D117 is a binding site for Mg(2+). Q240 is a substrate binding site. D268 is a Mg(2+) binding site. 312–314 (ESQ) is a substrate binding site. Residues D493 and G530 each contribute to the ATP site. Residue N531 participates in Mg(2+) binding. Position 533 (S533) interacts with substrate.

Belongs to the FGAMS family. Monomer. Part of the FGAM synthase complex composed of 1 PurL, 1 PurQ and 2 PurS subunits.

It is found in the cytoplasm. It catalyses the reaction N(2)-formyl-N(1)-(5-phospho-beta-D-ribosyl)glycinamide + L-glutamine + ATP + H2O = 2-formamido-N(1)-(5-O-phospho-beta-D-ribosyl)acetamidine + L-glutamate + ADP + phosphate + H(+). Its pathway is purine metabolism; IMP biosynthesis via de novo pathway; 5-amino-1-(5-phospho-D-ribosyl)imidazole from N(2)-formyl-N(1)-(5-phospho-D-ribosyl)glycinamide: step 1/2. In terms of biological role, part of the phosphoribosylformylglycinamidine synthase complex involved in the purines biosynthetic pathway. Catalyzes the ATP-dependent conversion of formylglycinamide ribonucleotide (FGAR) and glutamine to yield formylglycinamidine ribonucleotide (FGAM) and glutamate. The FGAM synthase complex is composed of three subunits. PurQ produces an ammonia molecule by converting glutamine to glutamate. PurL transfers the ammonia molecule to FGAR to form FGAM in an ATP-dependent manner. PurS interacts with PurQ and PurL and is thought to assist in the transfer of the ammonia molecule from PurQ to PurL. The sequence is that of Phosphoribosylformylglycinamidine synthase subunit PurL from Rhodopseudomonas palustris (strain TIE-1).